Reading from the N-terminus, the 245-residue chain is Phycocyanobilin:ferredoxin oxidoreductase (245 aa).

This sequence belongs to the HY2 family.

It catalyses the reaction (2R,3Z)-phycocyanobilin + 4 oxidized [2Fe-2S]-[ferredoxin] = biliverdin IXalpha + 4 reduced [2Fe-2S]-[ferredoxin] + 4 H(+). Functionally, catalyzes the four-electron reduction of biliverdin IX-alpha (2-electron reduction at both the A and D rings); the reaction proceeds via an isolatable 2-electron intermediate, 181,182-dihydrobiliverdin. The polypeptide is Phycocyanobilin:ferredoxin oxidoreductase (Trichodesmium erythraeum (strain IMS101)).